A 506-amino-acid polypeptide reads, in one-letter code: ATP synthase subunit alpha (506 aa).

G170–T177 serves as a coordination point for ATP.

This sequence belongs to the ATPase alpha/beta chains family. As to quaternary structure, F-type ATPases have 2 components, CF(1) - the catalytic core - and CF(0) - the membrane proton channel. CF(1) has five subunits: alpha(3), beta(3), gamma(1), delta(1), epsilon(1). CF(0) has four main subunits: a(1), b(1), b'(1) and c(9-12).

Its subcellular location is the cellular thylakoid membrane. It catalyses the reaction ATP + H2O + 4 H(+)(in) = ADP + phosphate + 5 H(+)(out). In terms of biological role, produces ATP from ADP in the presence of a proton gradient across the membrane. The alpha chain is a regulatory subunit. The polypeptide is ATP synthase subunit alpha (Synechococcus sp. (strain CC9902)).